A 479-amino-acid polypeptide reads, in one-letter code: Sodium-coupled neutral amino acid transporter 5 (479 aa).

Residues Met-1–Gly-61 are Cytoplasmic-facing. The helical transmembrane segment at Met-62–Ala-84 threads the bilayer. Over His-85–Cys-97 the chain is Extracellular. Residues Ile-98 to Ile-118 form a helical membrane-spanning segment. Topologically, residues Arg-119–Val-135 are cytoplasmic. The chain crosses the membrane as a helical span at residues Val-136–Ile-156. The Extracellular segment spans residues Lys-157–Trp-176. A helical transmembrane segment spans residues Phe-177–Leu-197. Topologically, residues Met-198–Gly-202 are cytoplasmic. The helical transmembrane segment at Tyr-203–Ile-223 threads the bilayer. Topologically, residues Tyr-224–Gln-264 are extracellular. A disulfide bridge connects residues Cys-231 and Cys-254. N-linked (GlcNAc...) asparagine glycosylation occurs at Asn-236. A helical transmembrane segment spans residues Met-265–Ile-285. The Cytoplasmic segment spans residues Tyr-286 to Asn-302. The chain crosses the membrane as a helical span at residues Met-303 to Phe-323. Residues Tyr-324–Leu-341 are Extracellular-facing. A helical transmembrane segment spans residues Ile-342–Phe-362. The Cytoplasmic portion of the chain corresponds to Pro-363 to His-383. The chain crosses the membrane as a helical span at residues Val-384–Ile-404. Over Arg-405–Asp-406 the chain is Extracellular. The helical transmembrane segment at Ile-407–Phe-427 threads the bilayer. Residues Tyr-428 to Gln-446 lie on the Cytoplasmic side of the membrane. Residues Ala-447–Ala-467 form a helical membrane-spanning segment. The Extracellular segment spans residues Asn-468 to His-479.

Belongs to the amino acid/polyamine transporter 2 family. As to expression, expressed in the ganglion cell layer and the nerve fiber layer (at protein level). Also expreseed in the cells of the inner nuclear layer and in the inner plexiform layer (at protein level). Expressed in Mueller and ganglion retinal cell.

The protein resides in the cell membrane. It carries out the reaction L-glutamine(out) + Na(+)(out) + H(+)(in) = L-glutamine(in) + Na(+)(in) + H(+)(out). It catalyses the reaction L-serine(out) + Na(+)(out) + H(+)(in) = L-serine(in) + Na(+)(in) + H(+)(out). The enzyme catalyses L-alanine(out) + Na(+)(out) + H(+)(in) = L-alanine(in) + Na(+)(in) + H(+)(out). The catalysed reaction is glycine(out) + Na(+)(out) + H(+)(in) = glycine(in) + Na(+)(in) + H(+)(out). It carries out the reaction L-asparagine(out) + Na(+)(out) + H(+)(in) = L-asparagine(in) + Na(+)(in) + H(+)(out). It catalyses the reaction L-histidine(out) + Na(+)(out) + H(+)(in) = L-histidine(in) + Na(+)(in) + H(+)(out). The enzyme catalyses L-cysteine(out) + Na(+)(out) + H(+)(in) = L-cysteine(in) + Na(+)(in) + H(+)(out). Not inhibited by lithium. Partial allosteric regulation on ions sodium binding. In terms of biological role, symporter that cotransports neutral amino acids and sodium ions, coupled to an H(+) antiporter activity. Releases L-glutamine and glycine from astroglial cells and may participate in the glutamate/GABA-L-glutamine cycle and the NMDA receptors activation. In addition, contributes significantly to L-glutamine uptake in retina, namely in ganglion and Mueller cells therefore, participates in the retinal glutamate-glutamine cycle. The transport activity is pH sensitive, Li(+) tolerant, bidirectional and associated with large uncoupled fluxes of protons. Moreover functions in both direction and is associated with large uncoupled fluxes of protons. The transport is electroneutral coupled to the cotransport of 1 Na(+) and the antiport of 1 H(+). May have a particular importance for modulation of net hepatic glutamine flux. In Mus musculus (Mouse), this protein is Sodium-coupled neutral amino acid transporter 5.